The primary structure comprises 676 residues: DNA ligase (676 aa).

Residues 35–39, 84–85, and Glu-118 each bind NAD(+); these read DYEFD and SL. Lys-120 serves as the catalytic N6-AMP-lysine intermediate. Residues Arg-141, Glu-184, Lys-299, and Lys-323 each coordinate NAD(+). Zn(2+) is bound by residues Cys-417, Cys-420, Cys-435, and Cys-441. One can recognise a BRCT domain in the interval 600-676; that stretch reads LINRNFEGVN…ISEDEFNAML (77 aa).

The protein belongs to the NAD-dependent DNA ligase family. LigA subfamily. It depends on Mg(2+) as a cofactor. The cofactor is Mn(2+).

It catalyses the reaction NAD(+) + (deoxyribonucleotide)n-3'-hydroxyl + 5'-phospho-(deoxyribonucleotide)m = (deoxyribonucleotide)n+m + AMP + beta-nicotinamide D-nucleotide.. DNA ligase that catalyzes the formation of phosphodiester linkages between 5'-phosphoryl and 3'-hydroxyl groups in double-stranded DNA using NAD as a coenzyme and as the energy source for the reaction. It is essential for DNA replication and repair of damaged DNA. In Chlorobium phaeobacteroides (strain DSM 266 / SMG 266 / 2430), this protein is DNA ligase.